Reading from the N-terminus, the 498-residue chain is Glycerol kinase (498 aa).

Position 12 (Thr-12) interacts with ADP. ATP contacts are provided by Thr-12, Thr-13, and Ser-14. Thr-12 is a sn-glycerol 3-phosphate binding site. Arg-16 is a binding site for ADP. 4 residues coordinate sn-glycerol 3-phosphate: Arg-82, Glu-83, Tyr-134, and Asp-243. 5 residues coordinate glycerol: Arg-82, Glu-83, Tyr-134, Asp-243, and Gln-244. 2 residues coordinate ADP: Thr-265 and Gly-308. Thr-265, Gly-308, Gln-312, and Gly-409 together coordinate ATP. Gly-409 and Asn-413 together coordinate ADP.

The protein belongs to the FGGY kinase family. Homotetramer and homodimer (in equilibrium).

It carries out the reaction glycerol + ATP = sn-glycerol 3-phosphate + ADP + H(+). The protein operates within polyol metabolism; glycerol degradation via glycerol kinase pathway; sn-glycerol 3-phosphate from glycerol: step 1/1. Its activity is regulated as follows. Activated by phosphorylation and inhibited by fructose 1,6-bisphosphate (FBP). Its function is as follows. Key enzyme in the regulation of glycerol uptake and metabolism. Catalyzes the phosphorylation of glycerol to yield sn-glycerol 3-phosphate. This Clostridium botulinum (strain ATCC 19397 / Type A) protein is Glycerol kinase.